A 468-amino-acid polypeptide reads, in one-letter code: Siroheme synthase (468 aa).

Positions 1–202 (MDYLPLFARL…EQHDSAEQWM (202 aa)) are precorrin-2 dehydrogenase /sirohydrochlorin ferrochelatase. Residues 22–23 (DI) and 43–44 (PS) each bind NAD(+). S126 is subject to Phosphoserine. The uroporphyrinogen-III C-methyltransferase stretch occupies residues 214 to 468 (GEIVLVGAGP…SGKEHLINLA (255 aa)). Residue P223 participates in S-adenosyl-L-methionine binding. The active-site Proton acceptor is the D246. K268 serves as the catalytic Proton donor. S-adenosyl-L-methionine is bound by residues 299–301 (GGD), 329–330 (TA), M381, and G410.

The protein in the N-terminal section; belongs to the precorrin-2 dehydrogenase / sirohydrochlorin ferrochelatase family. It in the C-terminal section; belongs to the precorrin methyltransferase family.

The enzyme catalyses uroporphyrinogen III + 2 S-adenosyl-L-methionine = precorrin-2 + 2 S-adenosyl-L-homocysteine + H(+). The catalysed reaction is precorrin-2 + NAD(+) = sirohydrochlorin + NADH + 2 H(+). It catalyses the reaction siroheme + 2 H(+) = sirohydrochlorin + Fe(2+). It functions in the pathway cofactor biosynthesis; adenosylcobalamin biosynthesis; precorrin-2 from uroporphyrinogen III: step 1/1. The protein operates within cofactor biosynthesis; adenosylcobalamin biosynthesis; sirohydrochlorin from precorrin-2: step 1/1. Its pathway is porphyrin-containing compound metabolism; siroheme biosynthesis; precorrin-2 from uroporphyrinogen III: step 1/1. It participates in porphyrin-containing compound metabolism; siroheme biosynthesis; siroheme from sirohydrochlorin: step 1/1. It functions in the pathway porphyrin-containing compound metabolism; siroheme biosynthesis; sirohydrochlorin from precorrin-2: step 1/1. Functionally, multifunctional enzyme that catalyzes the SAM-dependent methylations of uroporphyrinogen III at position C-2 and C-7 to form precorrin-2 via precorrin-1. Then it catalyzes the NAD-dependent ring dehydrogenation of precorrin-2 to yield sirohydrochlorin. Finally, it catalyzes the ferrochelation of sirohydrochlorin to yield siroheme. The chain is Siroheme synthase from Tolumonas auensis (strain DSM 9187 / NBRC 110442 / TA 4).